The chain runs to 427 residues: Transcription termination factor Rho (427 aa).

Residues 55 to 130 (YFFGEGVLEI…IKIEAINYRP (76 aa)) enclose the Rho RNA-BD domain. Residues 173–178 (GKGQRG), 185–190 (KAGKTT), and arginine 216 contribute to the ATP site.

This sequence belongs to the Rho family. Homohexamer. The homohexamer assembles into an open ring structure.

Facilitates transcription termination by a mechanism that involves Rho binding to the nascent RNA, activation of Rho's RNA-dependent ATPase activity, and release of the mRNA from the DNA template. The polypeptide is Transcription termination factor Rho (Thermotoga maritima (strain ATCC 43589 / DSM 3109 / JCM 10099 / NBRC 100826 / MSB8)).